A 559-amino-acid chain; its full sequence is Frizzled-1 (559 aa).

The first 35 residues, 1–35, serve as a signal peptide directing secretion; the sequence is MKHSHLLQRCSAQLCTRGSSLILSLLLSVCLSVEG. The Extracellular segment spans residues 36-239; the sequence is QYNGEKGISI…FAPEELNFAR (204 aa). Residues 46–165 enclose the FZ domain; the sequence is PDHGYCQPIS…NGAGELCVGQ (120 aa). Cystine bridges form between Cys-51-Cys-112, Cys-59-Cys-105, Cys-96-Cys-133, Cys-122-Cys-162, and Cys-126-Cys-150. Asn-65 carries an N-linked (GlcNAc...) asparagine glycan. Asn-166 carries N-linked (GlcNAc...) asparagine glycosylation. Residues 240-260 form a helical membrane-spanning segment; that stretch reads IWIGIWSVLCCASTLFTVLTY. Residues 261–273 are Cytoplasmic-facing; the sequence is LVDMKRFSYPERP. A helical transmembrane segment spans residues 274–294; it reads IIFLSGCYTMVAIAYIAGFLL. Over 295-321 the chain is Extracellular; the sequence is EDKVVCNERFAEDGYKTVAQGTKKEGC. Residues 322 to 342 form a helical membrane-spanning segment; the sequence is TFLFMMLYFFSMASSIWWVIL. At 343–364 the chain is on the cytoplasmic side; that stretch reads SLTWFLAAGMKWGHEAIEANSQ. The helical transmembrane segment at 365–385 threads the bilayer; it reads YFHLAAWAVPAIKTITILAVG. Residues 386-408 are Extracellular-facing; it reads QVDGDTLSGVCFVGINNVDALRG. Residues 409–429 form a helical membrane-spanning segment; sequence FVLAPLFVYLFIGTSFLLAGF. The Cytoplasmic portion of the chain corresponds to 430 to 455; that stretch reads VSLFRIRTIMKHDGTKTEKLEKLMVR. The helical transmembrane segment at 456–476 threads the bilayer; the sequence is IGIFSVLYTVPATIVIACYFY. The Extracellular portion of the chain corresponds to 477 to 513; it reads EQAFREQWEKSWISQSCKTYAIPCPSTGHPPMSPDFT. The helical transmembrane segment at 514 to 534 threads the bilayer; the sequence is VFMIKYLMTLIVGITSGFWIW. The Cytoplasmic segment spans residues 535–559; sequence SGKTLNSWRKFYTRLTNSKQGETTV. The Lys-Thr-X-X-X-Trp motif, mediates interaction with the PDZ domain of Dvl family members signature appears at 537–542; that stretch reads KTLNSW. Residues 557-559 carry the PDZ-binding motif; it reads TTV.

The protein belongs to the G-protein coupled receptor Fz/Smo family. As to quaternary structure, interacts with wnt8. As to expression, in the embryo, expressed in the heart, pronephros and otic vesicles.

Its subcellular location is the cell membrane. Its function is as follows. Receptor for Wnt proteins. Functions in the canonical Wnt/beta-catenin signaling pathway. The canonical Wnt/beta-catenin signaling pathway leads to the activation of disheveled proteins, inhibition of GSK-3 kinase, nuclear accumulation of beta-catenin and activation of Wnt target genes. A second signaling pathway involving PKC and calcium fluxes has been seen for some family members, but it is not yet clear if it represents a distinct pathway or if it can be integrated in the canonical pathway, as PKC seems to be required for Wnt-mediated inactivation of GSK-3 kinase. Both pathways seem to involve interactions with G-proteins. May be involved in transduction and intercellular transmission of polarity information during tissue morphogenesis and/or in differentiated tissues. This chain is Frizzled-1 (fzd1), found in Xenopus laevis (African clawed frog).